The following is a 23-amino-acid chain: Basic phospholipase A2 homolog Vur-S49 analog (23 aa).

The interval 1 to 23 (SVLEIGLMLQEETEKNPKTSYSI) is disordered.

Contains 7 disulfide bonds. As to expression, expressed by the venom gland.

The protein localises to the secreted. The sequence is that of Basic phospholipase A2 homolog Vur-S49 analog from Vipera renardi (Steppe viper).